Here is a 265-residue protein sequence, read N- to C-terminus: MSGALQWWETIGAASAQYNLDPRLVAGVVQTESSGNPRTTSGVGAMGLMQLMPATAKSLGVTNAYDPTQNIYGGAALLRENLDRYGDVNTALLAYHGGTNQANWGAKTKSYPGKVMKNINLLFGNSGPVVTPAAGIAPVSGAQEMTAVNISDYTAPDLTGLTMGAGSPDFTGGASGSWGEENIPWYRVDKHVANAAGSAYDAVTDAVSAPVEAAGNYALRGVVIIAAVAIVVVGLYFLFQDEINSAAMKMIPAGKAAGAAAKALA.

Residues 19-98 form a slt-type domain region; sequence NLDPRLVAGV…NTALLAYHGG (80 aa). Glu32 is an active-site residue. A helical transmembrane segment spans residues 219 to 239; it reads LRGVVIIAAVAIVVVGLYFLF.

It belongs to the transglycosylase Slt family. Heteromultimer composed of proteins P7 and P14.

It is found in the virion membrane. It catalyses the reaction Exolytic cleavage of the (1-&gt;4)-beta-glycosidic linkage between N-acetylmuramic acid (MurNAc) and N-acetylglucosamine (GlcNAc) residues in peptidoglycan, from either the reducing or the non-reducing ends of the peptidoglycan chains, with concomitant formation of a 1,6-anhydrobond in the MurNAc residue.. In terms of biological role, component of the phage ejection machinery which acts as an exolysin. Muralytic protein involved in host peptidoglycan digestion necessary for viral DNA entry into the host cell. Its function is as follows. Does not display any enzymatic activity. Required for DNA injection in the membrane transformation event. Involved in the formation of the membrane tail tube to connect the virus interior with the host cytosol. Essential for viral infectivity. The chain is Transglycosylase (VII) from Acinetobacter calcoaceticus (Arthrobacter siderocapsulatus).